Here is a 477-residue protein sequence, read N- to C-terminus: MKGLPVLLWLCVVVCSSYPLHDSARDDDAGMELLQKYLENYYGLAKDVKQFIKKKDSSLIVKKIQEMQKFLGLEMTGKLDSNTMELMHKPRCGVPDVGGFSTFPGSPKWRKSHITYRIVNYTPDLPRQSVDSAIEKALKVWEEVTPLTFSRISEGEADIMISFAVGEHGDFVPFDGPGTVLAHAYAPGPGINGDAHFDDDERWTEDVTGTNLFLVAAHELGHSLGLYHSAKAEALMYPVYKSSTDLSRFHLSQDDVDGIQSLYGTPTASPDVLVVPTKSNSLEPETSPMCSSTLFFDAVSTLRGEVLFFKDRHFWRKSLRTPEPEFYLISSFWPSLPSNMDAAYEVTNRDTVFIFKGNQFWAIRGHEELAGYPKSIHTLGLPATVKKIDAAISNKEKRKTYFFVEDKYWRFDEKKQSMEPGFPRKIAEDFPGVDSRVDAVFEAFGFLYFFSGSSQLEFDPNAKKVTHILKSNSWFNC.

The first 17 residues, 1 to 17 (MKGLPVLLWLCVVVCSS), serve as a signal peptide directing secretion. The propeptide at 18-99 (YPLHDSARDD…PRCGVPDVGG (82 aa)) is activation peptide. The short motif at 90–97 (PRCGVPDV) is the Cysteine switch element. A Zn(2+)-binding site is contributed by Cys-92. 2 residues coordinate Ca(2+): Asp-124 and Asp-158. 2 residues coordinate Zn(2+): His-168 and Asp-170. 4 residues coordinate Ca(2+): Asp-175, Gly-176, Gly-178, and Val-180. His-183 serves as a coordination point for Zn(2+). Residues Gly-190, Asn-192, and Asp-194 each coordinate Ca(2+). His-196 serves as a coordination point for Zn(2+). Residues Asp-198, Asp-199, and Glu-201 each contribute to the Ca(2+) site. Position 218 (His-218) interacts with Zn(2+). Residue Glu-219 is part of the active site. Residues His-222 and His-228 each contribute to the Zn(2+) site. Hemopexin repeat units follow at residues 287 to 336 (SPMC…WPSL), 337 to 383 (PSNM…GLPA), 385 to 433 (VKKI…FPGV), and 434 to 477 (DSRV…WFNC). Cys-290 and Cys-477 are oxidised to a cystine. Asp-297 serves as a coordination point for Ca(2+). Ca(2+) contacts are provided by Asp-389 and Asp-438.

It belongs to the peptidase M10A family. Ca(2+) serves as cofactor. Zn(2+) is required as a cofactor.

It is found in the secreted. The protein resides in the extracellular space. Its subcellular location is the extracellular matrix. It catalyses the reaction Preferential cleavage where P1', P2' and P3' are hydrophobic residues.. Functionally, metalloproteinase with a rather broad substrate specificity that can degrade fibronectin, laminin, gelatins of type I, III, IV, and V; collagens III, IV, X, and IX, and cartilage proteoglycans. Activates different molecules including growth factors, plasminogen or other matrix metalloproteinases such as MMP9. Once released into the extracellular matrix (ECM), the inactive pro-enzyme is activated by the plasmin cascade signaling pathway. Also acts intracellularly. For example, in dopaminergic neurons, gets activated by the serine protease HTRA2 upon stress and plays a pivotal role in DA neuronal degeneration by mediating microglial activation and alpha-synuclein/SNCA cleavage. In addition, plays a role in immune response and possesses antiviral activity against various viruses. Mechanistically, translocates from the cytoplasm into the cell nucleus upon virus infection to influence NF-kappa-B activities. The protein is Stromelysin-1 (Mmp3) of Mus musculus (Mouse).